A 212-amino-acid polypeptide reads, in one-letter code: Putative DNA-binding protein At1g48610 (212 aa).

Residues 1 to 130 (MAKTALTPPA…GRPKKDDVAA (130 aa)) form a disordered region. Polar residues predominate over residues 27–44 (NKPQTDATGVSATDTASQ). DNA-binding regions (a.T hook) lie at residues 45-56 (KRGRGRPPKAKS), 70-79 (TKPSGRPKRN), and 94-98 (KKRGR). The span at 57-72 (DSSQIGAVSAKASTKP) shows a compositional bias: polar residues. A compositionally biased stretch (low complexity) spans 103–113 (TVTAAVVTTAT). Positions 118–127 (RKRGRPKKDD) form a DNA-binding region, a.T hook 4. Residues 176-210 (DLKKRTALLQKKVKEAAAKLKQAVTAIDEVQKLAD) are a coiled coil.

It localises to the nucleus. May bind DNA. This chain is Putative DNA-binding protein At1g48610, found in Arabidopsis thaliana (Mouse-ear cress).